A 254-amino-acid polypeptide reads, in one-letter code: DNA repair protein RecO (254 aa).

Belongs to the RecO family.

In terms of biological role, involved in DNA repair and RecF pathway recombination. This chain is DNA repair protein RecO, found in Verminephrobacter eiseniae (strain EF01-2).